A 166-amino-acid chain; its full sequence is S-phase kinase-associated protein 1 homolog (166 aa).

The segment at 105 to 166 (ILAANYLDIK…ENKWAEEATS (62 aa)) is interaction with the F-box domain of F-box proteins.

Belongs to the SKP1 family. As to quaternary structure, component of multiple SCF (SKP1-CUL1-F-box) E3 ubiquitin-protein ligase complexes formed of CUL1, SKP1, RBX1 and a variable F-box domain-containing protein as substrate-specific subunit.

It participates in protein modification; protein ubiquitination. In terms of biological role, essential component of the SCF (SKP1-CUL1-F-box protein) ubiquitin ligase complex, which mediates the ubiquitination of proteins involved in cell cycle progression, signal transduction and transcription. In the SCF complex, serves as an adapter that links the F-box protein to CUL1. The functional specificity of the SCF complex depends on the F-box protein as substrate recognition component. Its association with the holoenzyme telomerase ribonucleoprotein complex suggests that it may play a role in turnover of holoenzyme telomerase complex components. The chain is S-phase kinase-associated protein 1 homolog from Tetrahymena thermophila (strain SB210).